The sequence spans 137 residues: Putative pre-16S rRNA nuclease (137 aa).

Belongs to the YqgF nuclease family.

The protein resides in the cytoplasm. In terms of biological role, could be a nuclease involved in processing of the 5'-end of pre-16S rRNA. This Clostridium kluyveri (strain NBRC 12016) protein is Putative pre-16S rRNA nuclease.